A 254-amino-acid polypeptide reads, in one-letter code: MVFDAVGNPQTILLLGGTSEIGLAICERYLRNASARIVLAVMPGDPGRDAAVEQMRKAGASAVDVVDFDALDTESHPAVIDQAFAGGDVDVAIVAFGLLGDAEELWQNQRKAVQIAGVNYTAAVSVGVLLGEKMRAQGSGQIIAMSSAAGERVRRSNFVYGSTKAGLDGFYLGLGEALREFGVRVLVIRPGQVRTRMSAHVKEAPLTVDKEYVAELAVTASAKGKELVWAPGAFRYVMMVLRHIPRPIFRKLPI.

An NAD(+)-binding site is contributed by Asp-67. Tyr-160 functions as the Proton acceptor in the catalytic mechanism. NAD(+) is bound at residue Lys-164.

The protein belongs to the short-chain dehydrogenases/reductases (SDR) family. Interacts with DprE1 to form an epimerase complex.

The protein resides in the periplasm. It catalyses the reaction trans,octa-cis-decaprenylphospho-beta-D-arabinofuranose + NAD(+) = trans,octa-cis-decaprenylphospho-beta-D-erythro-pentofuranosid-2-ulose + NADH + H(+). The protein operates within cell wall biogenesis; cell wall polysaccharide biosynthesis. In terms of biological role, component of the DprE1-DprE2 complex that catalyzes the 2-step epimerization of decaprenyl-phospho-ribose (DPR) to decaprenyl-phospho-arabinose (DPA), a key precursor that serves as the arabinose donor required for the synthesis of cell-wall arabinans. DprE1 catalyzes the first step of epimerization, namely FAD-dependent oxidation of the C2' hydroxyl of DPR to yield the keto intermediate decaprenyl-phospho-2'-keto-D-arabinose (DPX). The intermediate DPX is then transferred to DprE2 subunit of the epimerase complex, most probably through a 'substrate channel' at the interface of DprE1-DprE2 complex. DprE2 then catalyzes the second step of epimerization, the NAD(+)-dependent reduction of DPX that leads to the formation of DPA. The chain is Decaprenylphosphoryl-2-keto-beta-D-erythro-pentose reductase from Mycolicibacterium smegmatis (strain ATCC 700084 / mc(2)155) (Mycobacterium smegmatis).